The following is a 527-amino-acid chain: L-aspartate oxidase (527 aa).

FAD contacts are provided by residues 17–20 (TGVA), Lys40, 48–55 (ATHYAQGG), and Asp212. Residue Arg281 is the Proton donor/acceptor of the active site. Residues Glu364 and 380 to 381 (SL) each bind FAD.

It belongs to the FAD-dependent oxidoreductase 2 family. NadB subfamily. FAD is required as a cofactor.

Its subcellular location is the cytoplasm. The catalysed reaction is L-aspartate + O2 = iminosuccinate + H2O2. Its pathway is cofactor biosynthesis; NAD(+) biosynthesis; iminoaspartate from L-aspartate (oxidase route): step 1/1. Catalyzes the oxidation of L-aspartate to iminoaspartate, the first step in the de novo biosynthesis of NAD(+). In Mycobacterium tuberculosis (strain CDC 1551 / Oshkosh), this protein is L-aspartate oxidase (nadB).